Here is a 415-residue protein sequence, read N- to C-terminus: Elongation factor 1-gamma 1 (415 aa).

Ser-2 carries the N-acetylserine modification. The GST N-terminal domain maps to 2-78 (SQGTLYANFR…YLVKLSQDDK (77 aa)). Phosphothreonine is present on Thr-32. In terms of domain architecture, GST C-terminal spans 89–215 (DLNAQAQIIR…KDFKFADKPL (127 aa)). Residues 212 to 256 (DKPLSPPQKKKEKKAPAAAPAASKKKEEAKPAATETETSSKKPKH) form a disordered region. One can recognise an EF-1-gamma C-terminal domain in the interval 254–415 (PKHPLELLGK…KEIVDGKVLK (162 aa)).

As to quaternary structure, the eukaryotic elongation factor 1 complex (eEF1) is probably a heterohexamer. Two trimeric complexes, each composed of eEF1A (TEF1 or TEF2), eEF1Balpha (EFB1) and eEF1Bgamma (CAM1 or TEF4), are probably dimerized via the eF1Bgamma subunits. The eEF1B subcomplex with the GEF activity is formed of eEF1Balpha and eEF1Bgamma. CAM1 interacts with EFB1. Component of a complex bound to MXR1 promoter region.

It localises to the cytoplasm. It is found in the nucleus. Its pathway is protein biosynthesis; polypeptide chain elongation. In terms of biological role, subunit of the eukaryotic elongation factor 1 complex (eEF1). Probably plays a role in anchoring the complex to other cellular components. May be involved in transcriptional regulation of MXR1. This Saccharomyces cerevisiae (strain ATCC 204508 / S288c) (Baker's yeast) protein is Elongation factor 1-gamma 1 (CAM1).